We begin with the raw amino-acid sequence, 538 residues long: Mitochondrial distribution and morphology protein 34 (538 aa).

One can recognise an SMP-LTD domain in the interval 1–224 (MSFRFDRSVF…LPTALFNMSQ (224 aa)). Disordered stretches follow at residues 26 to 55 (ALNP…RKSG) and 231 to 251 (DGSR…NQPS).

The protein belongs to the MDM34 family. As to quaternary structure, component of the ER-mitochondria encounter structure (ERMES) or MDM complex, composed of MMM1, MDM10, MDM12 and MDM34.

Its subcellular location is the mitochondrion outer membrane. Component of the ERMES/MDM complex, which serves as a molecular tether to connect the endoplasmic reticulum (ER) and mitochondria. Components of this complex are involved in the control of mitochondrial shape and protein biogenesis, and function in nonvesicular lipid trafficking between the ER and mitochondria. MDM34 is required for the interaction of the ER-resident membrane protein MMM1 and the outer mitochondrial membrane-resident beta-barrel protein MDM10. This is Mitochondrial distribution and morphology protein 34 from Candida glabrata (strain ATCC 2001 / BCRC 20586 / JCM 3761 / NBRC 0622 / NRRL Y-65 / CBS 138) (Yeast).